The sequence spans 108 residues: Phosphoribosyl-AMP cyclohydrolase (108 aa).

Asp-72 provides a ligand contact to Mg(2+). Cys-73 contacts Zn(2+). Mg(2+) is bound by residues Asp-74 and Asp-76. Residues Cys-89 and Cys-96 each contribute to the Zn(2+) site.

The protein belongs to the PRA-CH family. As to quaternary structure, homodimer. Mg(2+) serves as cofactor. It depends on Zn(2+) as a cofactor.

Its subcellular location is the cytoplasm. The catalysed reaction is 1-(5-phospho-beta-D-ribosyl)-5'-AMP + H2O = 1-(5-phospho-beta-D-ribosyl)-5-[(5-phospho-beta-D-ribosylamino)methylideneamino]imidazole-4-carboxamide. It functions in the pathway amino-acid biosynthesis; L-histidine biosynthesis; L-histidine from 5-phospho-alpha-D-ribose 1-diphosphate: step 3/9. Catalyzes the hydrolysis of the adenine ring of phosphoribosyl-AMP. In Archaeoglobus fulgidus (strain ATCC 49558 / DSM 4304 / JCM 9628 / NBRC 100126 / VC-16), this protein is Phosphoribosyl-AMP cyclohydrolase.